The primary structure comprises 586 residues: YTH domain-containing family protein 2 (586 aa).

Disordered regions lie at residues 98–128 (LKEK…QPVQ), 141–181 (SQDQ…KESP), and 301–464 (QGLA…PLVS). Composition is skewed to polar residues over residues 107–128 (ALRQ…QPVQ), 169–181 (TLPT…KESP), and 352–368 (SSQA…TDIQ). The segment covering 398–418 (CARRHRSSSPRGRSGSHKSRR) has biased composition (basic residues). A compositionally biased stretch (polar residues) spans 421 to 436 (TDSPVSRSTTKSTPSR). The 142-residue stretch at 435–576 (SRARQPGHRD…YCGRDLLRLM (142 aa)) folds into the YTH domain. Residues 441–458 (GHRDYREYRDDRNRDTKP) are compositionally biased toward basic and acidic residues.

It belongs to the YTHDF family. YTHDF1 subfamily.

Its function is as follows. Specifically recognizes and binds N6-methyladenosine (m6A)-containing mRNAs, and regulates their stability. M6A is a modification present at internal sites of mRNAs and some non-coding RNAs and plays a role in mRNA stability and processing. Plays a role in pathogenicity towards plant host. This is YTH domain-containing family protein 2 from Pyricularia oryzae (strain 70-15 / ATCC MYA-4617 / FGSC 8958) (Rice blast fungus).